A 501-amino-acid polypeptide reads, in one-letter code: Glucose-6-phosphate exchanger SLC37A2 (501 aa).

The chain crosses the membrane as a helical span at residues 19-39 (SWFRGFILLLTFLIYACYHMS). N53, N62, and N68 each carry an N-linked (GlcNAc...) asparagine glycan. The next 5 membrane-spanning stretches (helical) occupy residues 88–108 (GAVD…SGIF), 118–140 (LSAG…FWNI), 142–164 (MLWY…WPSV), 179–199 (FIMG…SLIA), and 210–230 (SFIV…LFLI). Over residues 240–252 (PPRHHDDPEKEQD) the composition is skewed to basic and acidic residues. Positions 240-266 (PPRHHDDPEKEQDNPEDPVNSPYSSRE) are disordered. A run of 6 helical transmembrane segments spans residues 303–323 (CLLF…LYIF), 334–354 (GDLS…AGLI), 362–382 (ATTC…YNYI), 391–411 (IVML…ITTA), 434–454 (AIID…AGLI), and 462–482 (VFYM…RLVY).

This sequence belongs to the major facilitator superfamily. Organophosphate:Pi antiporter (OPA) (TC 2.A.1.4) family. Highly expressed in bone marrow derived macrophages, and weakly in spleen.

It is found in the endoplasmic reticulum membrane. It carries out the reaction D-glucose 6-phosphate(in) + phosphate(out) = D-glucose 6-phosphate(out) + phosphate(in). Inhibited by vanadate but not by chlorogenic acid. Functionally, inorganic phosphate and glucose-6-phosphate antiporter. May transport cytoplasmic glucose-6-phosphate into the lumen of the endoplasmic reticulum and translocate inorganic phosphate into the opposite direction. Independent of a lumenal glucose-6-phosphatase. May not play a role in homeostatic regulation of blood glucose levels. The polypeptide is Glucose-6-phosphate exchanger SLC37A2 (Mus musculus (Mouse)).